The primary structure comprises 196 residues: Serine recombinase PinQ (196 aa).

Residues 3-143 (QIFAYCRIST…SGIVRARGAG (141 aa)) enclose the Resolvase/invertase-type recombinase catalytic domain. Serine 11 functions as the O-(5'-phospho-DNA)-serine intermediate in the catalytic mechanism.

It belongs to the site-specific recombinase resolvase family.

This chain is Serine recombinase PinQ (pinQ), found in Escherichia coli (strain K12).